Here is an 81-residue protein sequence, read N- to C-terminus: Putative membrane protein insertion efficiency factor (81 aa).

Belongs to the UPF0161 family.

Its subcellular location is the cell inner membrane. Functionally, could be involved in insertion of integral membrane proteins into the membrane. The protein is Putative membrane protein insertion efficiency factor of Thermosipho melanesiensis (strain DSM 12029 / CIP 104789 / BI429).